The following is a 411-amino-acid chain: Elongation factor Tu, apicoplast (411 aa).

Positions 10 to 214 (KPHVNIGTIG…TVDSYIEKPE (205 aa)) constitute a tr-type G domain. Positions 19 to 26 (GHVDHGKT) are G1. Residue 19–26 (GHVDHGKT) coordinates GTP. Threonine 26 serves as a coordination point for Mg(2+). Residues 61–65 (GITIN) are G2. Residues 82–85 (DCPG) are G3. GTP is bound by residues 82–86 (DCPGH) and 137–140 (NKED). The G4 stretch occupies residues 137-140 (NKED). The tract at residues 175–177 (SAL) is G5.

It belongs to the TRAFAC class translation factor GTPase superfamily. Classic translation factor GTPase family. EF-Tu/EF-1A subfamily.

Its subcellular location is the plastid. The protein resides in the apicoplast. The enzyme catalyses GTP + H2O = GDP + phosphate + H(+). Functionally, GTP hydrolase that promotes the GTP-dependent binding of aminoacyl-tRNA to the A-site of ribosomes during protein biosynthesis. The protein is Elongation factor Tu, apicoplast (tufA) of Theileria parva (East coast fever infection agent).